Consider the following 639-residue polypeptide: Chaperone protein DnaK (639 aa).

Phosphothreonine; by autocatalysis is present on Thr198. Residues 603-618 show a composition bias toward low complexity; sequence AKAQTQGGAQEGAAKQ. The segment at 603 to 639 is disordered; the sequence is AKAQTQGGAQEGAAKQSNATADDVVDAEFEEVKDDKK. The span at 625–639 shows a compositional bias: acidic residues; sequence DVVDAEFEEVKDDKK.

Belongs to the heat shock protein 70 family.

Its function is as follows. Acts as a chaperone. The sequence is that of Chaperone protein DnaK from Shewanella sp. (strain MR-7).